A 467-amino-acid chain; its full sequence is MSQVRLRFAPSPTGYLHVGGARTALFNWLLARKQQGKFILRIEDTDVARSTQESVDAILEGMTWLGLDWDEGPFYQSDNFPLYKEYVEKLIAAGKAYKCYCSAEELEVKREKALKEGGKPKYDGTCRNLPQGADDGRPYVVRFKAPQEGTTYWNDLIKGKISFENAELDDLIIQRTDGTPTYNFVVVIDDATMGVTTVIRGDDHVNNTPRQILLYEALEVPVPQFAHVPMILGADKARLSKRHGATSVMAYRDMGFLPEAMVNYLVRLGWSYGDEEIFSLEDLVQKFSIENVGRSAGVFNPDKLLWLNAHYIKNGDPVRLAGLLIPFLKERGVTDTAGGPELPAVVKTLQERAKTMLELADGALFYYQQELSYDEKGVAKFFNPETPALLRGLFKKLGAVGELTTVAIEGVFKELCEEKGIKLGQVGPAVRLALSGSTASPGIYEMIEVLGLEETGKRLERAIAKLC.

The 'HIGH' region motif lies at 10-20; it reads PSPTGYLHVGG. Residues 238–242 carry the 'KMSKS' region motif; sequence RLSKR. ATP is bound at residue K241.

It belongs to the class-I aminoacyl-tRNA synthetase family. Glutamate--tRNA ligase type 1 subfamily. Monomer.

It localises to the cytoplasm. The catalysed reaction is tRNA(Glu) + L-glutamate + ATP = L-glutamyl-tRNA(Glu) + AMP + diphosphate. Catalyzes the attachment of glutamate to tRNA(Glu) in a two-step reaction: glutamate is first activated by ATP to form Glu-AMP and then transferred to the acceptor end of tRNA(Glu). This Citrifermentans bemidjiense (strain ATCC BAA-1014 / DSM 16622 / JCM 12645 / Bem) (Geobacter bemidjiensis) protein is Glutamate--tRNA ligase.